The primary structure comprises 194 residues: Endo-1,4-beta-xylanase (194 aa).

N-acetylglycine is present on G1. A GH11 domain is found at 1-191; it reads GTTPNSEGWH…SSGYARITVA (191 aa). Residue E86 is the Nucleophile of the active site. C110 and C154 form a disulfide bridge. E178 acts as the Proton donor in catalysis.

Belongs to the glycosyl hydrolase 11 (cellulase G) family.

It carries out the reaction Endohydrolysis of (1-&gt;4)-beta-D-xylosidic linkages in xylans.. It functions in the pathway glycan degradation; xylan degradation. This chain is Endo-1,4-beta-xylanase, found in Byssochlamys spectabilis (Paecilomyces variotii).